Consider the following 195-residue polypeptide: 3-isopropylmalate dehydratase small subunit (195 aa).

The protein belongs to the LeuD family. LeuD type 1 subfamily. As to quaternary structure, heterodimer of LeuC and LeuD.

The enzyme catalyses (2R,3S)-3-isopropylmalate = (2S)-2-isopropylmalate. It functions in the pathway amino-acid biosynthesis; L-leucine biosynthesis; L-leucine from 3-methyl-2-oxobutanoate: step 2/4. Its function is as follows. Catalyzes the isomerization between 2-isopropylmalate and 3-isopropylmalate, via the formation of 2-isopropylmaleate. The polypeptide is 3-isopropylmalate dehydratase small subunit (Frankia casuarinae (strain DSM 45818 / CECT 9043 / HFP020203 / CcI3)).